The primary structure comprises 136 residues: Small ribosomal subunit protein uS19 (136 aa).

The protein belongs to the universal ribosomal protein uS19 family.

Protein S19 forms a complex with S13 that binds strongly to the 16S ribosomal RNA. The polypeptide is Small ribosomal subunit protein uS19 (Methanosarcina mazei (strain ATCC BAA-159 / DSM 3647 / Goe1 / Go1 / JCM 11833 / OCM 88) (Methanosarcina frisia)).